The chain runs to 828 residues: Periplasmic nitrate reductase (828 aa).

Residues 1–31 (MKLSRRSFMKANAVAAAAAAAGLSVPGVARA) constitute a signal peptide (tat-type signal). Residues 39 to 95 (IKWDKAPCRFCGTGCGVLVGTQQGRVVACQGDPDAPVNRGLNCIKGYFLPKIMYGKD) form the 4Fe-4S Mo/W bis-MGD-type domain. Residues Cys-46, Cys-49, Cys-53, and Cys-81 each contribute to the [4Fe-4S] cluster site. Residues Lys-83, Gln-150, Asn-175, Cys-179, 212–219 (WGANMAEM), 243–247 (STYQH), 262–264 (QSD), Met-372, Gln-376, Asn-482, 508–509 (SD), Lys-531, Asp-558, and 718–727 (TGRVLEHWHT) each bind Mo-bis(molybdopterin guanine dinucleotide). Phe-794 lines the substrate pocket. Residues Asn-802 and Lys-819 each contribute to the Mo-bis(molybdopterin guanine dinucleotide) site.

Belongs to the prokaryotic molybdopterin-containing oxidoreductase family. NasA/NapA/NarB subfamily. Component of the periplasmic nitrate reductase NapAB complex composed of NapA and NapB. Requires [4Fe-4S] cluster as cofactor. Mo-bis(molybdopterin guanine dinucleotide) is required as a cofactor. In terms of processing, predicted to be exported by the Tat system. The position of the signal peptide cleavage has not been experimentally proven.

The protein resides in the periplasm. The enzyme catalyses 2 Fe(II)-[cytochrome] + nitrate + 2 H(+) = 2 Fe(III)-[cytochrome] + nitrite + H2O. Its function is as follows. Catalytic subunit of the periplasmic nitrate reductase complex NapAB. Receives electrons from NapB and catalyzes the reduction of nitrate to nitrite. The chain is Periplasmic nitrate reductase from Escherichia coli O157:H7 (strain EC4115 / EHEC).